Consider the following 527-residue polypeptide: Glutamate--cysteine ligase (527 aa).

Belongs to the glutamate--cysteine ligase type 1 family. Type 1 subfamily.

The catalysed reaction is L-cysteine + L-glutamate + ATP = gamma-L-glutamyl-L-cysteine + ADP + phosphate + H(+). It participates in sulfur metabolism; glutathione biosynthesis; glutathione from L-cysteine and L-glutamate: step 1/2. This Pseudomonas aeruginosa (strain UCBPP-PA14) protein is Glutamate--cysteine ligase.